The primary structure comprises 204 residues: LexA repressor (204 aa).

Residues 29 to 49 (RAEIADIMGFQSKNAASDHLR) constitute a DNA-binding region (H-T-H motif). Residues Ser123 and Lys160 each act as for autocatalytic cleavage activity in the active site.

It belongs to the peptidase S24 family. As to quaternary structure, homodimer.

The enzyme catalyses Hydrolysis of Ala-|-Gly bond in repressor LexA.. In terms of biological role, represses a number of genes involved in the response to DNA damage (SOS response), including recA and lexA. In the presence of single-stranded DNA, RecA interacts with LexA causing an autocatalytic cleavage which disrupts the DNA-binding part of LexA, leading to derepression of the SOS regulon and eventually DNA repair. In Alcanivorax borkumensis (strain ATCC 700651 / DSM 11573 / NCIMB 13689 / SK2), this protein is LexA repressor.